The following is a 54-amino-acid chain: IATVDCSDYPKPVCSLEDMPLCGSDSKTYSNKCNFCNAVVDSNGTLTLSHFGKC.

Residues 4-54 (VDCSDYPKPVCSLEDMPLCGSDSKTYSNKCNFCNAVVDSNGTLTLSHFGKC) form the Kazal-like domain. 3 cysteine pairs are disulfide-bonded: Cys6–Cys36, Cys14–Cys33, and Cys22–Cys54. Asn43 is a glycosylation site (N-linked (GlcNAc...) asparagine).

The protein resides in the secreted. The sequence is that of Ovomucoid from Vultur gryphus (Andean condor).